Consider the following 338-residue polypeptide: MENDHGILSDHPSGEEESQVEITLRPQKLREYIGQPKIKHELEVYIKAAQSREEALDHVLLYGPPGLGKTTLAMVIANEMGVNIRTTSGPAIEKPGDLVALLNELKPGDVLFVDEIHRLPKVVEEMLYSAMEDYYIDIVIGEGPTAHPVHFPLPPFTLIGATTRAGMLSAPLRDRFGIVEHMNYYTQDELTKIIFRSAKIFHTSIQDEGAHELSLRSRGTPRIANRLLKRVRDFAQVAGKQSIDSAIVKQALSLLQVDDRGLDEIDRKMLLTMINFYHGGPVGLKTIAANIGEETNTIEEMYEPYLLQIGFISRTPRGRLVTPTAYEHLGIEYPTDKN.

Basic and acidic residues predominate over residues 1–14 (MENDHGILSDHPSG). The segment at 1-21 (MENDHGILSDHPSGEEESQVE) is disordered. Residues 3–185 (NDHGILSDHP…FGIVEHMNYY (183 aa)) are large ATPase domain (RuvB-L). ATP-binding positions include leucine 24, arginine 25, glycine 66, lysine 69, threonine 70, threonine 71, 132-134 (EDY), arginine 175, tyrosine 185, and arginine 222. Threonine 70 contacts Mg(2+). Positions 186–256 (TQDELTKIIF…IVKQALSLLQ (71 aa)) are small ATPAse domain (RuvB-S). Positions 259–338 (DRGLDEIDRK…LGIEYPTDKN (80 aa)) are head domain (RuvB-H). Arginine 314 and arginine 319 together coordinate DNA.

This sequence belongs to the RuvB family. Homohexamer. Forms an RuvA(8)-RuvB(12)-Holliday junction (HJ) complex. HJ DNA is sandwiched between 2 RuvA tetramers; dsDNA enters through RuvA and exits via RuvB. An RuvB hexamer assembles on each DNA strand where it exits the tetramer. Each RuvB hexamer is contacted by two RuvA subunits (via domain III) on 2 adjacent RuvB subunits; this complex drives branch migration. In the full resolvosome a probable DNA-RuvA(4)-RuvB(12)-RuvC(2) complex forms which resolves the HJ.

The protein resides in the cytoplasm. The enzyme catalyses ATP + H2O = ADP + phosphate + H(+). Its function is as follows. The RuvA-RuvB-RuvC complex processes Holliday junction (HJ) DNA during genetic recombination and DNA repair, while the RuvA-RuvB complex plays an important role in the rescue of blocked DNA replication forks via replication fork reversal (RFR). RuvA specifically binds to HJ cruciform DNA, conferring on it an open structure. The RuvB hexamer acts as an ATP-dependent pump, pulling dsDNA into and through the RuvAB complex. RuvB forms 2 homohexamers on either side of HJ DNA bound by 1 or 2 RuvA tetramers; 4 subunits per hexamer contact DNA at a time. Coordinated motions by a converter formed by DNA-disengaged RuvB subunits stimulates ATP hydrolysis and nucleotide exchange. Immobilization of the converter enables RuvB to convert the ATP-contained energy into a lever motion, pulling 2 nucleotides of DNA out of the RuvA tetramer per ATP hydrolyzed, thus driving DNA branch migration. The RuvB motors rotate together with the DNA substrate, which together with the progressing nucleotide cycle form the mechanistic basis for DNA recombination by continuous HJ branch migration. Branch migration allows RuvC to scan DNA until it finds its consensus sequence, where it cleaves and resolves cruciform DNA. This chain is Holliday junction branch migration complex subunit RuvB, found in Limosilactobacillus reuteri (strain DSM 20016) (Lactobacillus reuteri).